The following is a 188-amino-acid chain: Elongation factor P (188 aa).

This sequence belongs to the elongation factor P family.

The protein resides in the cytoplasm. Its pathway is protein biosynthesis; polypeptide chain elongation. Its function is as follows. Involved in peptide bond synthesis. Stimulates efficient translation and peptide-bond synthesis on native or reconstituted 70S ribosomes in vitro. Probably functions indirectly by altering the affinity of the ribosome for aminoacyl-tRNA, thus increasing their reactivity as acceptors for peptidyl transferase. The chain is Elongation factor P from Christiangramia forsetii (strain DSM 17595 / CGMCC 1.15422 / KT0803) (Gramella forsetii).